Reading from the N-terminus, the 744-residue chain is Cullin-1 (744 aa).

The region spanning Asp-674–Asn-736 is the Cullin neddylation domain.

This sequence belongs to the cullin family. In terms of assembly, part of a SCF (SKP1-CUL1-F-box protein) E3 ubiquitin-protein ligase complex. Is able to form the SCF complex together with SKP1 and the rice black streaked dwarf virus RBSDV protein P7-2. Interacts with D3. In terms of processing, neddylated (rubylated). Deneddylation occurs upon interaction with the COP9 signalosome (CSN) complex. Expressed in dry seeds and coleoptiles.

Functionally, involved in ubiquitination and subsequent proteasomal degradation of target proteins. This chain is Cullin-1, found in Oryza sativa subsp. japonica (Rice).